The chain runs to 118 residues: Protein TusC (118 aa).

The protein belongs to the DsrF/TusC family. As to quaternary structure, heterohexamer, formed by a dimer of trimers. The hexameric TusBCD complex contains 2 copies each of TusB, TusC and TusD. The TusBCD complex interacts with TusE.

The protein localises to the cytoplasm. Part of a sulfur-relay system required for 2-thiolation of 5-methylaminomethyl-2-thiouridine (mnm(5)s(2)U) at tRNA wobble positions. The polypeptide is Protein TusC (Salmonella gallinarum (strain 287/91 / NCTC 13346)).